Reading from the N-terminus, the 400-residue chain is Elongation factor Tu (400 aa).

Residues 10 to 210 (KPHINVGTIG…ALDEYIPEPK (201 aa)) form the tr-type G domain. The interval 19 to 26 (GHVDHGKT) is G1. GTP is bound at residue 19-26 (GHVDHGKT). Threonine 26 lines the Mg(2+) pocket. The interval 64–68 (GITIA) is G2. The tract at residues 85–88 (DCPG) is G3. Residues 85 to 89 (DCPGH) and 140 to 143 (NKAD) contribute to the GTP site. The G4 stretch occupies residues 140–143 (NKAD). A G5 region spans residues 178–180 (SAL).

It belongs to the TRAFAC class translation factor GTPase superfamily. Classic translation factor GTPase family. EF-Tu/EF-1A subfamily. In terms of assembly, monomer.

It localises to the cytoplasm. The catalysed reaction is GTP + H2O = GDP + phosphate + H(+). In terms of biological role, GTP hydrolase that promotes the GTP-dependent binding of aminoacyl-tRNA to the A-site of ribosomes during protein biosynthesis. The polypeptide is Elongation factor Tu (Rubrobacter xylanophilus (strain DSM 9941 / JCM 11954 / NBRC 16129 / PRD-1)).